The following is a 317-amino-acid chain: Acetyl-coenzyme A carboxylase carboxyl transferase subunit alpha (317 aa).

One can recognise a CoA carboxyltransferase C-terminal domain in the interval 40 to 293 (LEVRVREAIV…GDVIANALGE (254 aa)).

It belongs to the AccA family. In terms of assembly, acetyl-CoA carboxylase is a heterohexamer composed of biotin carboxyl carrier protein (AccB), biotin carboxylase (AccC) and two subunits each of ACCase subunit alpha (AccA) and ACCase subunit beta (AccD).

Its subcellular location is the cytoplasm. The catalysed reaction is N(6)-carboxybiotinyl-L-lysyl-[protein] + acetyl-CoA = N(6)-biotinyl-L-lysyl-[protein] + malonyl-CoA. It functions in the pathway lipid metabolism; malonyl-CoA biosynthesis; malonyl-CoA from acetyl-CoA: step 1/1. Component of the acetyl coenzyme A carboxylase (ACC) complex. First, biotin carboxylase catalyzes the carboxylation of biotin on its carrier protein (BCCP) and then the CO(2) group is transferred by the carboxyltransferase to acetyl-CoA to form malonyl-CoA. This Rhizobium leguminosarum bv. trifolii (strain WSM2304) protein is Acetyl-coenzyme A carboxylase carboxyl transferase subunit alpha.